The following is a 393-amino-acid chain: Short chain dehydrogenase sirQ (393 aa).

Leucine 54 is an NADP(+) binding site. Catalysis depends on serine 233, which acts as the Proton donor. The active-site Lowers pKa of active site Tyr is the lysine 259. Alanine 286 provides a ligand contact to NADP(+).

The protein belongs to the short-chain dehydrogenases/reductases (SDR) family. Highly divergent.

It functions in the pathway mycotoxin biosynthesis. In terms of biological role, short chain dehydrogenase; part of the gene cluster that mediates the biosynthesis of sirodesmin PL, an epipolythiodioxopiperazine (ETP) characterized by a disulfide bridged cyclic dipeptide and that acts as a phytotoxin which is involved in the blackleg didease of canola. SirD catalyzes the O-prenylation of L-tyrosine (L-Tyr) in the presence of dimethylallyl diphosphate (DMAPP) to yield 4-O-dimethylallyl-L-Tyr, and therefore represents probably the first pathway-specific enzyme in the biosynthesis of sirodesmin PL. 4-O-dimethylallyl-L-Tyr, then undergoes condensation with L-Ser in a reaction catalyzed by the non-ribosomal peptide synthase sirP to form the diketopiperazine (DKP) backbone. Further bishydroxylation of the DKP performed by the cytochrome P450 monooxygenase sirC leads to the production of the intermediate phomamide. This step is essential to form the reactive thiol group required for toxicity of sirodesmin PL. The next steps of sirodesmin biosynthesis are not well understood yet, but some predictions could be made from intermediate compounds identification. Phomamide is converted into phomalizarine via oxidation, probably by sirT. Further oxidation, methylation (by sirM or sirN) and reduction steps convert phomalizarine to deacetyl sirodesmin. Finally, acetyltransferase sirH probably acetylates deacetyl sirodesmin to produce sirodesmin PL. This is Short chain dehydrogenase sirQ from Leptosphaeria maculans (Blackleg fungus).